The following is a 410-amino-acid chain: Multidrug resistance protein MdtM (410 aa).

Residues 1 to 11 (MPRFFARHAAT) lie on the Cytoplasmic side of the membrane. Residues 12 to 32 (LFFPMALILYDFAAYLSTDLI) traverse the membrane as a helical segment. The Periplasmic portion of the chain corresponds to 33 to 48 (QPGIINVVRDFNADVS). A helical transmembrane segment spans residues 49 to 69 (LAPAAVSLYLAGGMALQWLLG). The Cytoplasmic portion of the chain corresponds to 70–78 (PLSDRIGRK). Residues 79-99 (PVLITGALIFTLACAATMFTT) form a helical membrane-spanning segment. Over 100 to 103 (SMTQ) the chain is Periplasmic. A helical transmembrane segment spans residues 104 to 124 (FLIARAIQGTSICFIATVGYV). Topologically, residues 125 to 140 (TVQEAFGQTKGIKLMA) are cytoplasmic. The chain crosses the membrane as a helical span at residues 141 to 161 (IITSIVLIAPIIGPLSGAALM). Residues 162–167 (HFVHWK) are Periplasmic-facing. Residues 168 to 188 (VLFAIIAVMGFISFVGLLLAM) traverse the membrane as a helical segment. The Cytoplasmic segment spans residues 189–216 (PETVKRGAVPFSAKSVLRDFRNVFCNRL). The helical transmembrane segment at 217 to 237 (FLFGAATISLSYIPMMSWVAV) threads the bilayer. The Periplasmic portion of the chain corresponds to 238 to 251 (SPVILIDAGGLTTS). Residues 252 to 272 (QFAWTQVPVFGAVIVANAIVA) form a helical membrane-spanning segment. The Cytoplasmic segment spans residues 273–282 (RFVKDPTEPR). Residues 283 to 303 (FIWRAVPIQLVGLALLIIGNL) traverse the membrane as a helical segment. At 304-307 (LSPH) the chain is on the periplasmic side. Residues 308-328 (VWLWSVLGTSLYAFGIGLIFP) traverse the membrane as a helical segment. Topologically, residues 329 to 348 (TLFRFTLFSNNLPKGTVSAS) are cytoplasmic. The helical transmembrane segment at 349-369 (LNMVILMVMSVSVEIGRWLWF) threads the bilayer. Over 370–373 (NGGR) the chain is Periplasmic. The helical transmembrane segment at 374–394 (LPFHLLAVVAGVIVVFTLAGL) threads the bilayer. Residues 395–410 (LNRVRQHQAAELAEEQ) are Cytoplasmic-facing.

It belongs to the major facilitator superfamily.

It is found in the cell inner membrane. Functionally, proton-dependent efflux pump. Confers resistance to a broad spectrum of chemically unrelated substrates. The polypeptide is Multidrug resistance protein MdtM (mdtM) (Escherichia coli O157:H7).